Here is a 191-residue protein sequence, read N- to C-terminus: Thymidine kinase (191 aa).

Residues 9 to 16 and 85 to 88 contribute to the ATP site; these read GSMNSGKT and DESQ. Catalysis depends on Glu86, which acts as the Proton acceptor. Zn(2+) contacts are provided by Cys143, Cys146, Cys181, and Cys184.

This sequence belongs to the thymidine kinase family. Homotetramer.

The protein localises to the cytoplasm. It catalyses the reaction thymidine + ATP = dTMP + ADP + H(+). The sequence is that of Thymidine kinase from Listeria innocua serovar 6a (strain ATCC BAA-680 / CLIP 11262).